A 551-amino-acid chain; its full sequence is Ubiquitin carboxyl-terminal hydrolase 24 (551 aa).

2 disordered regions span residues 51-104 and 163-188; these read NSSV…SLRV and NEDF…TESV. In terms of domain architecture, USP spans 197–551; that stretch reads RGLINAGNLC…QAYVLFYKQV (355 aa). Cysteine 206 acts as the Nucleophile in catalysis. The segment covering 329–338 has biased composition (polar residues); that stretch reads SKSSVISSAN. Positions 329-349 are disordered; sequence SKSSVISSANDDGDEWETVGP. Histidine 510 serves as the catalytic Proton acceptor.

It belongs to the peptidase C19 family.

It catalyses the reaction Thiol-dependent hydrolysis of ester, thioester, amide, peptide and isopeptide bonds formed by the C-terminal Gly of ubiquitin (a 76-residue protein attached to proteins as an intracellular targeting signal).. Recognizes and hydrolyzes the peptide bond at the C-terminal Gly of ubiquitin. Involved in the processing of poly-ubiquitin precursors as well as that of ubiquitinated proteins. This is Ubiquitin carboxyl-terminal hydrolase 24 (UBP24) from Arabidopsis thaliana (Mouse-ear cress).